The chain runs to 91 residues: Acylphosphatase (91 aa).

The Acylphosphatase-like domain maps to 5–91 (CSKFIVSGHV…EHDYQGFEIL (87 aa)). Catalysis depends on residues Arg-20 and Asn-38.

The protein belongs to the acylphosphatase family.

The enzyme catalyses an acyl phosphate + H2O = a carboxylate + phosphate + H(+). This is Acylphosphatase (acyP) from Vibrio cholerae serotype O1 (strain ATCC 39315 / El Tor Inaba N16961).